A 1481-amino-acid chain; its full sequence is MQRSPLEKASVVSKLFFSWTRPILRKGYRQRLELSDIYQIPSADSADNLSEKLEREWDRELASKKNPKLINALRRCFFWRFMFYGILLYLGEVTKAVQPLLLGRIIASYDPDNKEERSIAIYLGIGLCLLFIVRTLLLHPAIFGLHHIGMQMRIAMFSLIYKKTLKLSSRVLDKISIGQLVSLLSNNLNKFDEGLALAHFVWIVPLQVALLMGLIWELLQASAFCGLGFLIVLALFQAGLGRMMMKYRDQRAGKINERLVITSEMIENIQSVKAYCWEEAMEKMIENLRQTELKLTRKAAYVRYFNSSAFFFSGFFVVFLSVLPYALIKGIVLRKIFTTISFCIVLRMAVTRQFPWAVQTWYDSLGAINKIQDFLQKQEYKTLEYNLTTTEVVMENVTAFWEEGFGELFEKAKQNNSNRKTSNDDDSLFFSNFSLLGTPVLKDINFKIERGQLLAVAGSTGAGKTSLLMMIMGELEPSEGKIKHSGRISFCSQFSWIMPGTIKENIIFGVSYDEYRYRSVINACQLEEDISKFAEKDNIVLGEGGITLSGGQRARISLARAVYKDADLYLLDSPFGYLDVLTEKEIFESCVCKLMANKTRILVTSKMEHLKKADKILILHEGSSYFYGTFSELQNLRPDFSSKLMGYDSFDQFSAERRNSILTETLRRFSLEGDAPVSWTETKKQSFKQTGEFGEKRKNSILNPINSIRKFSIVQKTPLQMNGIEEDSDEPLERRLSLVPDSEQGEVILPRISVISTGPTLQARRRQSVLNLMTHSVNQGQSIHRKTAASTRKVSLAPQANLTELDIYSRRLSQETGLEISEEINEEDLKECFFDDMESIPAVTTWNTYLRYITVHKSLIFVLIWCLVIFLAEVAASLVVLWFLGNTPPQDKGNSTYSRNNSYAVIITRTSSYYVFYIYVGVADTLLAMGFFRGLPLVHTLITVSKILHHKMLHSVLQAPMSTLNTLKAGGILNRFSKDIAILDDLLPLTIFDFIQLLLIVIGAIAVVAVLQPYIFVATVPVIVAFIMLRAYFLQTSQQLKQLESEGRSPIFTHLVTSLKGLWTLRAFGRQPYFETLFHKALNLHTANWFLYLSTLRWFQMRIEMIFVIFFIAVTFISILTTGEGEGTVGIILTLAMNIMSTLQWAVNSSIDVDSLMRSVSRVFKFIDMPTEEGKPTRSTKPYKNGQLSKVMVIENSHVKKDDIWPSGGQMTVKDLTAKYTEGGNPILENISFSISPGQRVGLLGRTGSGKSTLLSAFLRLLNTEGEIQIDGVSWDSITLQQWRKAFGVIPQKVFIFSGTFRKNLDPYEQWSDQEIWKVADEVGLRSVIEQFPGKLDFVLVDGGCVLSHGHKQLMCLARSVLSKAKILLLDEPSAHLDPVTYQIIRRTLKQAFADCTVILCEHRIEAMLECQQFLVIEENKVRQYDSIQKLLNERSLFQQAISPSDRVKLFPHRNSSKCKTQPQIAALKEETEEEVQDTRL.

Over 1 to 77 (MQRSPLEKAS…KLINALRRCF (77 aa)) the chain is Cytoplasmic. The chain crosses the membrane as a helical span at residues 78–98 (FWRFMFYGILLYLGEVTKAVQ). The ABC transmembrane type-1 1 domain occupies 81–365 (FMFYGILLYL…WAVQTWYDSL (285 aa)). Residues 99 to 122 (PLLLGRIIASYDPDNKEERSIAIY) are Extracellular-facing. Residues 123–146 (LGIGLCLLFIVRTLLLHPAIFGLH) traverse the membrane as a helical segment. Topologically, residues 147–195 (HIGMQMRIAMFSLIYKKTLKLSSRVLDKISIGQLVSLLSNNLNKFDEGL) are cytoplasmic. Residues 196-216 (ALAHFVWIVPLQVALLMGLIW) traverse the membrane as a helical segment. Residues 217–222 (ELLQAS) are Extracellular-facing. A helical transmembrane segment spans residues 223–243 (AFCGLGFLIVLALFQAGLGRM). The Cytoplasmic segment spans residues 244–298 (MMKYRDQRAGKINERLVITSEMIENIQSVKAYCWEEAMEKMIENLRQTELKLTRK). The helical transmembrane segment at 299–319 (AAYVRYFNSSAFFFSGFFVVF) threads the bilayer. Topologically, residues 320 to 339 (LSVLPYALIKGIVLRKIFTT) are extracellular. Residues 340–358 (ISFCIVLRMAVTRQFPWAV) traverse the membrane as a helical segment. Residues 359–858 (QTWYDSLGAI…YLRYITVHKS (500 aa)) lie on the Cytoplasmic side of the membrane. ATP is bound by residues tryptophan 401, serine 434, 458–465 (GSTGAGKT), and glutamine 493. The region spanning 423–646 (NDDDSLFFSN…RPDFSSKLMG (224 aa)) is the ABC transporter 1 domain. Cysteine 524 carries the S-palmitoyl cysteine lipid modification. Serine 549 and serine 660 each carry phosphoserine. Residues 654 to 831 (SAERRNSILT…EEINEEDLKE (178 aa)) form a disordered R region region. At serine 670 the chain carries Phosphoserine; by PKA. The residue at position 686 (serine 686) is a Phosphoserine. A Glycyl lysine isopeptide (Lys-Gly) (interchain with G-Cter in ubiquitin) cross-link involves residue lysine 688. Residues serine 700 and serine 712 each carry the phosphoserine modification. At threonine 717 the chain carries Phosphothreonine. Phosphoserine occurs at positions 737, 753, 768, 790, 795, and 813. The chain crosses the membrane as a helical span at residues 859 to 879 (LIFVLIWCLVIFLAEVAASLV). The ABC transmembrane type-1 2 domain occupies 859–1155 (LIFVLIWCLV…AVNSSIDVDS (297 aa)). Residues 880–918 (VLWFLGNTPPQDKGNSTYSRNNSYAVIITRTSSYYVFYI) are Extracellular-facing. N-linked (GlcNAc...) asparagine glycans are attached at residues asparagine 894 and asparagine 900. The chain crosses the membrane as a discontinuously helical span at residues 919 to 939 (YVGVADTLLAMGFFRGLPLVH). At 940-990 (TLITVSKILHHKMLHSVLQAPMSTLNTLKAGGILNRFSKDIAILDDLLPLT) the chain is on the cytoplasmic side. The chain crosses the membrane as a helical span at residues 991-1011 (IFDFIQLLLIVIGAIAVVAVL). Topologically, residues 1012 to 1013 (QP) are extracellular. Residues 1014–1034 (YIFVATVPVIVAFIMLRAYFL) traverse the membrane as a helical segment. Residues 1035 to 1095 (QTSQQLKQLE…TANWFLYLST (61 aa)) lie on the Cytoplasmic side of the membrane. The chain crosses the membrane as a helical span at residues 1096 to 1116 (LRWFQMRIEMIFVIFFIAVTF). Topologically, residues 1117-1130 (ISILTTGEGEGTVG) are extracellular. A helical membrane pass occupies residues 1131 to 1151 (IILTLAMNIMSTLQWAVNSSI). Residues 1152–1481 (DVDSLMRSVS…TEEEVQDTRL (330 aa)) lie on the Cytoplasmic side of the membrane. An ABC transporter 2 domain is found at 1211–1444 (MTVKDLTAKY…RSLFQQAISP (234 aa)). ATP is bound by residues tyrosine 1220 and 1245–1252 (GRTGSGKS). Residues 1387–1481 (RTLKQAFADC…TEEEVQDTRL (95 aa)) form an interaction with GORASP2 region. Cysteine 1396 carries S-palmitoyl cysteine lipidation. Phosphoserine occurs at positions 1445 and 1457. A PDZ-binding motif is present at residues 1479-1481 (TRL).

It belongs to the ABC transporter superfamily. ABCC family. CFTR transporter (TC 3.A.1.202) subfamily. In terms of assembly, monomer; does not require oligomerization for channel activity. May form oligomers in the membrane. Interacts with SLC26A3, SLC26A6 and NHERF1. Interacts with SHANK2. Interacts with MYO6. Interacts (via C-terminus) with GOPC (via PDZ domain); this promotes CFTR internalization and thereby decreases channel activity. Interacts with SLC4A7 through NHERF1. Found in a complex with MYO5B and RAB11A. Interacts with ANO1. Interacts with SLC26A8. Interacts with AHCYL1; the interaction increases CFTR activity. Interacts with CSE1L. The core-glycosylated form interacts with GORASP2 (via PDZ GRASP-type 1 domain) in respone to ER stress. Interacts with MARCHF2; the interaction leads to CFTR ubiqtuitination and degradation. Interacts with ADGRG2. Post-translationally, N-glycosylated. Phosphorylated; cAMP treatment promotes phosphorylation and activates the channel. Dephosphorylation decreases the ATPase activity (in vitro). Phosphorylation at PKA sites activates the channel. Phosphorylation at PKC sites enhances the response to phosphorylation by PKA. Phosphorylated by AMPK; this inhibits channel activity. In terms of processing, ubiquitinated, leading to its degradation in the lysosome. Deubiquitination by USP10 in early endosomes enhances its endocytic recycling to the cell membrane. Ubiquitinated by RNF185 during ER stress. Ubiquitinated by MARCHF2.

The protein resides in the apical cell membrane. It is found in the early endosome membrane. The protein localises to the cell membrane. Its subcellular location is the recycling endosome membrane. It localises to the endoplasmic reticulum membrane. The protein resides in the nucleus. It catalyses the reaction ATP + H2O + closed Cl(-) channel = ADP + phosphate + open Cl(-) channel.. The enzyme catalyses chloride(in) = chloride(out). It carries out the reaction hydrogencarbonate(in) = hydrogencarbonate(out). The catalysed reaction is ATP + H2O = ADP + phosphate + H(+). Its function is as follows. Epithelial ion channel that plays an important role in the regulation of epithelial ion and water transport and fluid homeostasis. Mediates the transport of chloride ions across the cell membrane. Possesses an intrinsic ATPase activity and utilizes ATP to gate its channel; the passive flow of anions through the channel is gated by cycles of ATP binding and hydrolysis by the ATP-binding domains. The ion channel is also permeable to HCO(3)(-); selectivity depends on the extracellular chloride concentration. Exerts its function also by modulating the activity of other ion channels and transporters. Contributes to the regulation of the pH and the ion content of the epithelial fluid layer. Modulates the activity of the epithelial sodium channel (ENaC) complex, in part by regulating the cell surface expression of the ENaC complex. May regulate bicarbonate secretion and salvage in epithelial cells by regulating the transporter SLC4A7. Can inhibit the chloride channel activity of ANO1. Plays a role in the chloride and bicarbonate homeostasis during sperm epididymal maturation and capacitation. The sequence is that of Cystic fibrosis transmembrane conductance regulator from Macaca nemestrina (Pig-tailed macaque).